The sequence spans 339 residues: F420-dependent glucose-6-phosphate dehydrogenase (339 aa).

Asp41 lines the coenzyme F420-(gamma-Glu)n pocket. The active-site Proton donor is His42. Residues Thr78 and 109–110 contribute to the coenzyme F420-(gamma-Glu)n site; that span reads TG. Glu111 (proton acceptor) is an active-site residue. Coenzyme F420-(gamma-Glu)n-binding positions include Asn114, 177–178, and 180–181; these read SG and AA. Residues Thr195, Lys198, Lys259, and Arg283 each coordinate substrate.

Belongs to the F420-dependent glucose-6-phosphate dehydrogenase family. As to quaternary structure, homodimer.

The catalysed reaction is oxidized coenzyme F420-(gamma-L-Glu)(n) + D-glucose 6-phosphate + H(+) = 6-phospho-D-glucono-1,5-lactone + reduced coenzyme F420-(gamma-L-Glu)(n). Its function is as follows. Catalyzes the coenzyme F420-dependent oxidation of glucose 6-phosphate (G6P) to 6-phosphogluconolactone. This chain is F420-dependent glucose-6-phosphate dehydrogenase, found in Nakamurella multipartita (strain ATCC 700099 / DSM 44233 / CIP 104796 / JCM 9543 / NBRC 105858 / Y-104) (Microsphaera multipartita).